Consider the following 41-residue polypeptide: Large ribosomal subunit protein bL36 (41 aa).

Belongs to the bacterial ribosomal protein bL36 family.

In Ruegeria sp. (strain TM1040) (Silicibacter sp.), this protein is Large ribosomal subunit protein bL36.